Reading from the N-terminus, the 290-residue chain is 33 kDa chaperonin (290 aa).

Cystine bridges form between Cys-235–Cys-237 and Cys-268–Cys-271.

It belongs to the HSP33 family. In terms of processing, under oxidizing conditions two disulfide bonds are formed involving the reactive cysteines. Under reducing conditions zinc is bound to the reactive cysteines and the protein is inactive.

It localises to the cytoplasm. In terms of biological role, redox regulated molecular chaperone. Protects both thermally unfolding and oxidatively damaged proteins from irreversible aggregation. Plays an important role in the bacterial defense system toward oxidative stress. This is 33 kDa chaperonin from Streptococcus gordonii (strain Challis / ATCC 35105 / BCRC 15272 / CH1 / DL1 / V288).